The sequence spans 319 residues: Solute carrier family 25 member 34 (319 aa).

The disordered stretch occupies residues 1 to 22 (MNSAFSGPSSPTPGPSPPRPPL). Over residues 10 to 22 (SPTPGPSPPRPPL) the composition is skewed to pro residues. 3 Solcar repeats span residues 22-115 (LWPP…MQAA), 119-212 (DGPC…AKDW), and 222-313 (LSSL…LRQR). The next 6 membrane-spanning stretches (helical) occupy residues 25–45 (PLDF…TNPL), 63–83 (SYRR…RTDG), 116–138 (GVTD…GAFI), 188–209 (VNGA…FSSA), 224–244 (SLNT…IMTP), and 296–319 (LAPH…PYTH).

Belongs to the mitochondrial carrier (TC 2.A.29) family.

The protein resides in the mitochondrion inner membrane. In Danio rerio (Zebrafish), this protein is Solute carrier family 25 member 34 (slc25a34).